The sequence spans 312 residues: Light-independent protochlorophyllide reductase iron-sulfur ATP-binding protein (312 aa).

ATP is bound by residues 55–60 (GIGKST) and Lys84. Ser59 lines the Mg(2+) pocket. [4Fe-4S] cluster contacts are provided by Cys140 and Cys174. Residues 225 to 226 (NR) and 249 to 251 (PDL) contribute to the ATP site.

Belongs to the NifH/BchL/ChlL family. In terms of assembly, homodimer. Protochlorophyllide reductase is composed of three subunits; BchL, BchN and BchB. The cofactor is [4Fe-4S] cluster.

The enzyme catalyses chlorophyllide a + oxidized 2[4Fe-4S]-[ferredoxin] + 2 ADP + 2 phosphate = protochlorophyllide a + reduced 2[4Fe-4S]-[ferredoxin] + 2 ATP + 2 H2O. The protein operates within porphyrin-containing compound metabolism; bacteriochlorophyll biosynthesis (light-independent). Component of the dark-operative protochlorophyllide reductase (DPOR) that uses Mg-ATP and reduced ferredoxin to reduce ring D of protochlorophyllide (Pchlide) to form chlorophyllide a (Chlide). This reaction is light-independent. The L component serves as a unique electron donor to the NB-component of the complex, and binds Mg-ATP. In Rhodopseudomonas palustris (strain ATCC BAA-98 / CGA009), this protein is Light-independent protochlorophyllide reductase iron-sulfur ATP-binding protein.